Reading from the N-terminus, the 139-residue chain is Large ribosomal subunit protein uL16 (139 aa).

The disordered stretch occupies residues 74-94; the sequence is LTKKPAETRQGSGKGSPESWV.

The protein belongs to the universal ribosomal protein uL16 family. Part of the 50S ribosomal subunit.

Functionally, binds 23S rRNA and is also seen to make contacts with the A and possibly P site tRNAs. This is Large ribosomal subunit protein uL16 from Saccharopolyspora erythraea (strain ATCC 11635 / DSM 40517 / JCM 4748 / NBRC 13426 / NCIMB 8594 / NRRL 2338).